A 26-amino-acid polypeptide reads, in one-letter code: Citropin-2.1.3 (26 aa).

In terms of tissue distribution, expressed by the dorsal and submental skin glands.

It is found in the secreted. In Ranoidea citropa (Australian Blue Mountains tree frog), this protein is Citropin-2.1.3.